A 280-amino-acid chain; its full sequence is Diaminopimelate epimerase (280 aa).

Substrate-binding residues include Asn-14 and Asn-67. The Proton donor role is filled by Cys-76. Substrate-binding positions include 77–78, Asn-193, and 210–211; these read GN and ER. Cys-220 functions as the Proton acceptor in the catalytic mechanism. Substrate is bound at residue 221 to 222; the sequence is GT.

The protein belongs to the diaminopimelate epimerase family. Homodimer.

It is found in the cytoplasm. It carries out the reaction (2S,6S)-2,6-diaminopimelate = meso-2,6-diaminopimelate. Its pathway is amino-acid biosynthesis; L-lysine biosynthesis via DAP pathway; DL-2,6-diaminopimelate from LL-2,6-diaminopimelate: step 1/1. Functionally, catalyzes the stereoinversion of LL-2,6-diaminopimelate (L,L-DAP) to meso-diaminopimelate (meso-DAP), a precursor of L-lysine. The chain is Diaminopimelate epimerase from Methanocella arvoryzae (strain DSM 22066 / NBRC 105507 / MRE50).